Reading from the N-terminus, the 629-residue chain is Chaperone protein DnaK (629 aa).

The segment covering 576–587 (QAYQQQQDAQAG) has biased composition (low complexity). The interval 576 to 629 (QAYQQQQDAQAGAAGGAGGMGGMGGMADGPGGAADADGDDEEYVDADFEDVDEE) is disordered. Gly residues predominate over residues 588 to 607 (AAGGAGGMGGMGGMADGPGG). A compositionally biased stretch (acidic residues) spans 611-629 (ADGDDEEYVDADFEDVDEE).

It belongs to the heat shock protein 70 family.

Acts as a chaperone. This is Chaperone protein DnaK from Halobacterium salinarum (strain ATCC 29341 / DSM 671 / R1).